The chain runs to 81 residues: Photosystem I iron-sulfur center (81 aa).

4Fe-4S ferredoxin-type domains follow at residues 2 to 31 (SHSV…MVPW) and 37 to 68 (GQIA…IRVY). Residues C11, C14, C17, C21, C48, C51, C54, and C58 each contribute to the [4Fe-4S] cluster site.

As to quaternary structure, the cyanobacterial PSI reaction center is composed of one copy each of PsaA,B,C,D,E,F,I,J,K,L,M and X, and forms trimeric complexes. [4Fe-4S] cluster serves as cofactor.

It localises to the cellular thylakoid membrane. The enzyme catalyses reduced [plastocyanin] + hnu + oxidized [2Fe-2S]-[ferredoxin] = oxidized [plastocyanin] + reduced [2Fe-2S]-[ferredoxin]. Apoprotein for the two 4Fe-4S centers FA and FB of photosystem I (PSI); essential for photochemical activity. FB is the terminal electron acceptor of PSI, donating electrons to ferredoxin. The C-terminus interacts with PsaA/B/D and helps assemble the protein into the PSI complex. Required for binding of PsaD and PsaE to PSI. PSI is a plastocyanin/cytochrome c6-ferredoxin oxidoreductase, converting photonic excitation into a charge separation, which transfers an electron from the donor P700 chlorophyll pair to the spectroscopically characterized acceptors A0, A1, FX, FA and FB in turn. The chain is Photosystem I iron-sulfur center from Synechococcus sp. (strain RCC307).